A 223-amino-acid polypeptide reads, in one-letter code: Ubiquitin carboxyl-terminal hydrolase isozyme L1 (223 aa).

Residue Met-1 is modified to N-acetylmethionine. The 220-residue stretch at 2–221 folds into the UCH catalytic domain; that stretch reads QLKPMEINPE…VRFSAVALCK (220 aa). The interval 5–10 is interaction with ubiquitin; that stretch reads PMEINP. Catalysis depends on Cys-90, which acts as the Nucleophile. Ser-125 carries the phosphoserine modification. Catalysis depends on His-161, which acts as the Proton donor. The interaction with ubiquitin stretch occupies residues 211 to 216; that stretch reads EVRFSA. The S-farnesyl cysteine moiety is linked to residue Cys-220. Positions 221-223 are cleaved as a propeptide — removed in mature form; that stretch reads KAA.

Belongs to the peptidase C12 family. In terms of assembly, monomer. Homodimer. Interacts with COPS5 and SNCA. In terms of processing, O-glycosylated.

The protein localises to the cytoplasm. It is found in the endoplasmic reticulum membrane. The catalysed reaction is Thiol-dependent hydrolysis of ester, thioester, amide, peptide and isopeptide bonds formed by the C-terminal Gly of ubiquitin (a 76-residue protein attached to proteins as an intracellular targeting signal).. Functionally, ubiquitin-protein hydrolase involved both in the processing of ubiquitin precursors and of ubiquitinated proteins. This enzyme is a thiol protease that recognizes and hydrolyzes a peptide bond at the C-terminal glycine of ubiquitin. Also binds to free monoubiquitin and may prevent its degradation in lysosomes. The homodimer may have ATP-independent ubiquitin ligase activity. The polypeptide is Ubiquitin carboxyl-terminal hydrolase isozyme L1 (UCHL1) (Equus caballus (Horse)).